Consider the following 601-residue polypeptide: 66 kDa stress protein (601 aa).

WD repeat units lie at residues 56–95 (EHAQ…HPLK), 100–143 (VLSG…GEIT), 145–184 (HSKA…FKHA), 187–226 (EHTR…KVGA), 233–272 (AHAL…LTTF), 318–357 (GHNK…AVPI), 435–478 (ASTT…LSEQ), 483–522 (GHRG…IKVE), 526–565 (YHNA…KHIA), and 569–600 (AHRG…WTIK).

It belongs to the WD repeat AIP1 family.

Its function is as follows. Associated with the process of cyst formation. The sequence is that of 66 kDa stress protein from Physarum polycephalum (Slime mold).